The primary structure comprises 512 residues: GTPase Obg (512 aa).

Residues 2-159 (ATFVDTVTLH…GDVVLELKVV (158 aa)) enclose the Obg domain. Positions 160–336 (ADVALVGYPS…LSFALAELVE (177 aa)) constitute an OBG-type G domain. Residues 166–173 (GYPSAGKS), 191–195 (FTTLH), 212–215 (DVPG), 288–291 (NKID), and 317–319 (STV) each bind GTP. Mg(2+) is bound by residues serine 173 and threonine 193. The 85-residue stretch at 355–439 (PRAVNEKPFT…GDGIVFDWEP (85 aa)) folds into the OCT domain. The tract at residues 491–512 (GEAGLWADEDGTDEDASSDAKA) is disordered. Acidic residues predominate over residues 497–512 (ADEDGTDEDASSDAKA).

The protein belongs to the TRAFAC class OBG-HflX-like GTPase superfamily. OBG GTPase family. In terms of assembly, monomer. Mg(2+) is required as a cofactor.

It localises to the cytoplasm. In terms of biological role, an essential GTPase which binds GTP, GDP and possibly (p)ppGpp with moderate affinity, with high nucleotide exchange rates and a fairly low GTP hydrolysis rate. Plays a role in control of the cell cycle, stress response, ribosome biogenesis and in those bacteria that undergo differentiation, in morphogenesis control. This chain is GTPase Obg, found in Clavibacter michiganensis subsp. michiganensis (strain NCPPB 382).